The sequence spans 530 residues: Retinoic acid-induced protein 2 (530 aa).

Residues 1–13 (MDDLQSQNLSMDM) show a composition bias toward polar residues. A disordered region spans residues 1–22 (MDDLQSQNLSMDMTDSPPALAN).

In Homo sapiens (Human), this protein is Retinoic acid-induced protein 2 (RAI2).